The sequence spans 382 residues: Serine/threonine-protein phosphatase 2A activator 2 (382 aa).

The disordered stretch occupies residues 363–382 (SHKGVPTLGNRPGIKPIPFD).

It belongs to the PTPA-type PPIase family.

It localises to the cytoplasm. The enzyme catalyses [protein]-peptidylproline (omega=180) = [protein]-peptidylproline (omega=0). Its function is as follows. PPIases accelerate the folding of proteins. It catalyzes the cis-trans isomerization of proline imidic peptide bonds in oligopeptides. Acts as a regulatory subunit for PP2A-like phosphatases modulating their activity or substrate specificity, probably by inducing a conformational change in the catalytic subunit, a direct target of the PPIase. Can reactivate inactive phosphatase PP2A-phosphatase methylesterase complexes (PP2Ai) in presence of ATP and Mg(2+) by dissociating the inactive form from the complex. This chain is Serine/threonine-protein phosphatase 2A activator 2 (RRD2), found in Cryptococcus neoformans var. neoformans serotype D (strain B-3501A) (Filobasidiella neoformans).